A 551-amino-acid chain; its full sequence is Membrane protein insertase YidC (551 aa).

The chain crosses the membrane as a helical span at residues 3–23; sequence ANHIRILLLVTIAIMFISLMG. Residues 33 to 55 form a disordered region; the sequence is NTKQQTSATQNNSHYDNADSSTN. The next 3 helical transmembrane spans lie at 361–381, 431–451, and 504–524; these read LVGNWGLAIILVTCLIKLIFY, LSGCLPMLIQIPIFISLYWVL, and VMMFLPVIFTFLFASFPSGLV.

It belongs to the OXA1/ALB3/YidC family. Type 1 subfamily. As to quaternary structure, interacts with the Sec translocase complex via SecD. Specifically interacts with transmembrane segments of nascent integral membrane proteins during membrane integration.

The protein localises to the cell inner membrane. Functionally, required for the insertion and/or proper folding and/or complex formation of integral membrane proteins into the membrane. Involved in integration of membrane proteins that insert both dependently and independently of the Sec translocase complex, as well as at least some lipoproteins. Aids folding of multispanning membrane proteins. The chain is Membrane protein insertase YidC from Francisella tularensis subsp. holarctica (strain OSU18).